The chain runs to 1142 residues: MGPKGKKKGQSFDDSDEEINNKKGGNKKGQQLEDDIPQPVKKGGNKKGQRGKQDSDDEPENIPQPVAKKSNNKKGQRGKQDSDDEQDEIPQPQKKGGKPAPQPQKKGGKQQDSDDEQDEIPQPVKKGGKPAPQKKGGKQQQQQDSDDEQEEIPQPVKKGGKPAPQKKGGKQQDSDDEEDEIPQPVKKGGKPAPQKKGGKQQESEDEDEEDEVQQPVKKGGKNDKKKGVKHVEEEEEEEEEEEIEQPVKKGGKAPKPKKGGKGSKQESEDEEDDVQQPVKKGGKKDKKKGSKHVEEEEEEEEEEEIEQPVKKGSNKKDQKKGGKGKHVEEEEEEEEEEEIEQPVKKGSNKKDQKKGGKGKQQQESEDEEEEIQQPVKKGGKKDKKKGSKHVEEEEEEEEEEEEIEQPVKKGGKKDKKSSLEDSMSELSIKSKKGGKGKHVEEEEEQEQEEEEEKPKSKSNKKDKKKGKHVEEEEEEEEEEEEKPKSKSNKKDKKKGSKHIEEEEEEEEEEEEEEKEEEEEKKMTLAEIRAAKKVKKVDKKEKKKEKEKKKRDEQEEDAFELAKKKQQEEIDYDNIDIDDVPGKDAPTYVHLKSSEGLRSKIGNDIKFDNLILSVPGRILLNNASLTLAYGQKYGFVGRNGIGKSTLVKKIAMRDEITIAPHLRVLYVEQEVTGDDTTPLDCVLAADEERKWLLDEEKVLTELEKVNPSWQFDPRQKRNYSLRDIYDRLKEIDADKASIRAANILIGLGFTFEEISVKKSRDYSGGWRMRIALARALFCKPEVLLLDEPSNHLDLHACVWLEKYLNQWDRTLLVVSHEASFLNEVVDNIIYIHDQKLDQYRGNYDAFMKQKSVNLRSKEKEKDKQDRKLKKMNEFITKNKNNTQAKQAASRAKKMEKIETIELEREDASLVVDFPQPEHLTPPLLVFKDVCFGYEGRPTMFKKLDIGIDMDSKIALVGMNGVGKSTLMKLMNGDLHETTGYIERSRKMRVARFSQHFVDQLDTTMTPIEYFQSKFNNPPVQQIRNHLGRFGICNSLPLHKITTLSGGQKSRVILAELAWAEPHILLLDEPTNHLDIDAIEALAEGINAFTGGVVLISHNQHLINLIAEQIWVVKKDGTIYLYPGTFMDYKNEISREIDNMVIRS.

The segment at 1–564 (MGPKGKKKGQ…EDAFELAKKK (564 aa)) is disordered. Low complexity-rich tracts occupy residues 121 to 143 (PQPVKKGGKPAPQKKGGKQQQQQ), 153 to 166 (PQPVKKGGKPAPQK), and 182 to 195 (PQPVKKGGKPAPQK). 2 stretches are compositionally biased toward acidic residues: residues 203–212 (SEDEDEEDEV) and 233–244 (EEEEEEEEEEIE). Composition is skewed to basic residues over residues 249–261 (KGGKAPKPKKGGK) and 280–290 (KGGKKDKKKGS). Over residues 295–306 (EEEEEEEEEEIE) the composition is skewed to acidic residues. A compositionally biased stretch (basic and acidic residues) spans 314–328 (NKKDQKKGGKGKHVE). Positions 329–340 (EEEEEEEEEEIE) are enriched in acidic residues. Residues 377–387 (KGGKKDKKKGS) show a composition bias toward basic residues. Composition is skewed to acidic residues over residues 392–404 (EEEEEEEEEEEIE) and 441–451 (EEEEQEQEEEE). The segment covering 456 to 467 (SKSNKKDKKKGK) has biased composition (basic residues). Residues 471 to 480 (EEEEEEEEEE) show a composition bias toward acidic residues. A compositionally biased stretch (basic residues) spans 485 to 496 (SKSNKKDKKKGS). Residues 501 to 518 (EEEEEEEEEEEEEKEEEE) are compositionally biased toward acidic residues. Basic residues predominate over residues 530-548 (AKKVKKVDKKEKKKEKEKK). 2 ABC transporter domains span residues 604-857 (IKFD…RSKE) and 923-1139 (LVFK…DNMV). Residues 636 to 643 (GRNGIGKS) and 956 to 963 (GMNGVGKS) contribute to the ATP site.

The protein belongs to the ABC transporter superfamily.

This Dictyostelium discoideum (Social amoeba) protein is ABC transporter F family member 4 (abcF4).